The primary structure comprises 810 residues: Actin-regulating kinase PRK1 (810 aa).

In terms of domain architecture, Protein kinase spans 22 to 298; that stretch reads AKIIKYLTSG…CQVLEEVSRL (277 aa). Residues 28-36 and Lys56 contribute to the ATP site; that span reads LTSGGFAQV. The active-site Proton acceptor is Asp158. Phosphoserine is present on residues Ser402, Ser428, and Ser484. Disordered stretches follow at residues 552–668 and 733–761; these read FTGN…NVNI and GVLDIKTKSNGKDKSRPPRPPPKPLHLRT. Thr553 is modified (phosphothreonine). Over residues 553 to 566 the composition is skewed to polar residues; it reads TGNSVNNSRSASFD. Position 556 is a phosphoserine (Ser556). Over residues 567 to 588 the composition is skewed to low complexity; it reads NNNVNGNGNNTNRRLVSSSTSS. Basic and acidic residues-rich tracts occupy residues 594–612 and 622–639; these read SDTKRKEESDKNQRLEKRR and FDQHERNNSRTGSRDYYR. Residues 645 to 658 are compositionally biased toward low complexity; sequence KKTQASAKTTSKPT. Residues 733-748 are compositionally biased toward basic and acidic residues; it reads GVLDIKTKSNGKDKSR. Residues 743-756 are interaction with SH3 domain of ABP1; that stretch reads GKDKSRPPRPPPKP.

Belongs to the protein kinase superfamily. Ser/Thr protein kinase family. In terms of assembly, interacts with ABP1, which is required for proper actin patch localization.

The protein resides in the cytoplasm. Its subcellular location is the cytoskeleton. It is found in the actin patch. It carries out the reaction L-seryl-[protein] + ATP = O-phospho-L-seryl-[protein] + ADP + H(+). The catalysed reaction is L-threonyl-[protein] + ATP = O-phospho-L-threonyl-[protein] + ADP + H(+). Protein kinase involved in the regulation of actin cytoskeleton organization and endocytosis. Phosphorylates PAN1 which disrupts the interaction between PAN1 and END3, and between PAN1 and SLA1. Phosphorylates SCD5. Preferentially, phosphorylates substrates on threonine residues in a [L/I/V/M]-x-x-[Q/N/T/S]-x-T-G motif. This chain is Actin-regulating kinase PRK1 (PRK1), found in Saccharomyces cerevisiae (strain ATCC 204508 / S288c) (Baker's yeast).